The sequence spans 128 residues: Profilin (128 aa).

This sequence belongs to the profilin family.

More likely to influence phosphoinositide metabolism than actin assembly. The sequence is that of Profilin from Homo sapiens (Human).